We begin with the raw amino-acid sequence, 123 residues long: Large ribosomal subunit protein uL18 (123 aa).

Belongs to the universal ribosomal protein uL18 family. In terms of assembly, part of the 50S ribosomal subunit; part of the 5S rRNA/L5/L18/L25 subcomplex. Contacts the 5S and 23S rRNAs.

Its function is as follows. This is one of the proteins that bind and probably mediate the attachment of the 5S RNA into the large ribosomal subunit, where it forms part of the central protuberance. The chain is Large ribosomal subunit protein uL18 from Chlamydia felis (strain Fe/C-56) (Chlamydophila felis).